A 193-amino-acid polypeptide reads, in one-letter code: MNFLAHLHLAHLAESSLSGNLLADFVRGNPEESFPPDVVAGIHMHRRIDVLTDNLPEVREAREWFRRETRRVAPITLDVMWDHFLSRHWSQLSPDFPLQEFICYARKQVMTILPDSPPRFINLNNYLWSEQWLVRYRDMDFIQNVLNGMASRRPRLDALRDSWYDLNAHYTALETRFWQFYPRMMAQASHKAL.

This sequence belongs to the AcpH family.

The catalysed reaction is holo-[ACP] + H2O = apo-[ACP] + (R)-4'-phosphopantetheine + H(+). Converts holo-ACP to apo-ACP by hydrolytic cleavage of the phosphopantetheine prosthetic group from ACP. The protein is Acyl carrier protein phosphodiesterase of Shigella boydii serotype 18 (strain CDC 3083-94 / BS512).